Here is a 199-residue protein sequence, read N- to C-terminus: Imidazole glycerol phosphate synthase subunit HisH (199 aa).

The 199-residue stretch at 1-199 (MTVVVDYEMG…QILKNLREML (199 aa)) folds into the Glutamine amidotransferase type-1 domain. Residue cysteine 79 is the Nucleophile of the active site. Active-site residues include histidine 180 and glutamate 182.

Heterodimer of HisH and HisF.

The protein resides in the cytoplasm. The enzyme catalyses 5-[(5-phospho-1-deoxy-D-ribulos-1-ylimino)methylamino]-1-(5-phospho-beta-D-ribosyl)imidazole-4-carboxamide + L-glutamine = D-erythro-1-(imidazol-4-yl)glycerol 3-phosphate + 5-amino-1-(5-phospho-beta-D-ribosyl)imidazole-4-carboxamide + L-glutamate + H(+). It carries out the reaction L-glutamine + H2O = L-glutamate + NH4(+). The protein operates within amino-acid biosynthesis; L-histidine biosynthesis; L-histidine from 5-phospho-alpha-D-ribose 1-diphosphate: step 5/9. In terms of biological role, IGPS catalyzes the conversion of PRFAR and glutamine to IGP, AICAR and glutamate. The HisH subunit catalyzes the hydrolysis of glutamine to glutamate and ammonia as part of the synthesis of IGP and AICAR. The resulting ammonia molecule is channeled to the active site of HisF. The polypeptide is Imidazole glycerol phosphate synthase subunit HisH (Carboxydothermus hydrogenoformans (strain ATCC BAA-161 / DSM 6008 / Z-2901)).